Consider the following 137-residue polypeptide: CUB domain-containing protein (137 aa).

An N-terminal signal peptide occupies residues 1–21; the sequence is MRLSRAFAWPLLCSIATTVKA. 2 disulfide bridges follow: cysteine 30/cysteine 51 and cysteine 75/cysteine 96. Residues 30 to 132 enclose the CUB domain; it reads CGGHYTDEYG…TFFEIYYFVD (103 aa).

This is CUB domain-containing protein from Homo sapiens (Human).